A 190-amino-acid polypeptide reads, in one-letter code: Elongation factor P-like protein (190 aa).

It belongs to the elongation factor P family.

The protein is Elongation factor P-like protein of Pectobacterium atrosepticum (strain SCRI 1043 / ATCC BAA-672) (Erwinia carotovora subsp. atroseptica).